Consider the following 388-residue polypeptide: Pepsin A-2/A-3 (388 aa).

The signal sequence occupies residues 1 to 15; it reads MKWLLLLGLVALSEC. Propeptides (activation peptide) lie at residues 16–40 and 41–62; these read IIHK…LLKD and FLKK…APTL. The Peptidase A1 domain maps to 76-385; it reads YFGTIGIGTP…DRANNQVGLA (310 aa). The active site involves D94. Cysteines 107 and 112 form a disulfide. S130 is modified (phosphoserine). Cysteines 268 and 272 form a disulfide. D277 is a catalytic residue. C311 and C344 are disulfide-bonded.

The protein belongs to the peptidase A1 family. Pepsin A-2 is phosphorylated, but not pepsin A-3. In terms of processing, each pepsinogen is converted to corresponding pepsin at pH 2.0 in part as a result of the release of a 47 AA activation segment and in part as a result of stepwise proteolytic cleavage via an intermediate form(s).

It is found in the secreted. It catalyses the reaction Preferential cleavage: hydrophobic, preferably aromatic, residues in P1 and P1' positions. Cleaves 1-Phe-|-Val-2, 4-Gln-|-His-5, 13-Glu-|-Ala-14, 14-Ala-|-Leu-15, 15-Leu-|-Tyr-16, 16-Tyr-|-Leu-17, 23-Gly-|-Phe-24, 24-Phe-|-Phe-25 and 25-Phe-|-Tyr-26 bonds in the B chain of insulin.. In terms of biological role, shows particularly broad specificity; although bonds involving phenylalanine and leucine are preferred, many others are also cleaved to some extent. In Macaca fuscata fuscata (Japanese macaque), this protein is Pepsin A-2/A-3.